The primary structure comprises 364 residues: UDP-N-acetylenolpyruvoylglucosamine reductase (364 aa).

Residues 30–196 (LGGPATRLIT…LRVRFELEDA (167 aa)) form the FAD-binding PCMH-type domain. The active site involves arginine 173. The active-site Proton donor is the serine 252. Glutamate 356 is a catalytic residue.

Belongs to the MurB family. Requires FAD as cofactor.

The protein resides in the cytoplasm. The catalysed reaction is UDP-N-acetyl-alpha-D-muramate + NADP(+) = UDP-N-acetyl-3-O-(1-carboxyvinyl)-alpha-D-glucosamine + NADPH + H(+). It functions in the pathway cell wall biogenesis; peptidoglycan biosynthesis. Functionally, cell wall formation. The sequence is that of UDP-N-acetylenolpyruvoylglucosamine reductase from Streptomyces avermitilis (strain ATCC 31267 / DSM 46492 / JCM 5070 / NBRC 14893 / NCIMB 12804 / NRRL 8165 / MA-4680).